Here is a 284-residue protein sequence, read N- to C-terminus: Formamidopyrimidine-DNA glycosylase (284 aa).

Residue Pro-2 is the Schiff-base intermediate with DNA of the active site. The active-site Proton donor is Glu-3. The active-site Proton donor; for beta-elimination activity is Lys-61. Residues His-95, Arg-114, and Arg-159 each coordinate DNA. Residues 244–278 (WVYGRKGQPCRVCNTPIERIRLAGRSTHFCPTCQR) form an FPG-type zinc finger. Arg-268 acts as the Proton donor; for delta-elimination activity in catalysis.

The protein belongs to the FPG family. In terms of assembly, monomer. Requires Zn(2+) as cofactor.

It carries out the reaction Hydrolysis of DNA containing ring-opened 7-methylguanine residues, releasing 2,6-diamino-4-hydroxy-5-(N-methyl)formamidopyrimidine.. It catalyses the reaction 2'-deoxyribonucleotide-(2'-deoxyribose 5'-phosphate)-2'-deoxyribonucleotide-DNA = a 3'-end 2'-deoxyribonucleotide-(2,3-dehydro-2,3-deoxyribose 5'-phosphate)-DNA + a 5'-end 5'-phospho-2'-deoxyribonucleoside-DNA + H(+). Involved in base excision repair of DNA damaged by oxidation or by mutagenic agents. Acts as a DNA glycosylase that recognizes and removes damaged bases. Has a preference for oxidized purines, such as 7,8-dihydro-8-oxoguanine (8-oxoG). Has AP (apurinic/apyrimidinic) lyase activity and introduces nicks in the DNA strand. Cleaves the DNA backbone by beta-delta elimination to generate a single-strand break at the site of the removed base with both 3'- and 5'-phosphates. The sequence is that of Formamidopyrimidine-DNA glycosylase from Gloeobacter violaceus (strain ATCC 29082 / PCC 7421).